The following is a 121-amino-acid chain: Large ribosomal subunit protein uL18 (121 aa).

It belongs to the universal ribosomal protein uL18 family. In terms of assembly, part of the 50S ribosomal subunit; part of the 5S rRNA/L5/L18/L25 subcomplex. Contacts the 5S and 23S rRNAs.

Its function is as follows. This is one of the proteins that bind and probably mediate the attachment of the 5S RNA into the large ribosomal subunit, where it forms part of the central protuberance. The chain is Large ribosomal subunit protein uL18 from Albidiferax ferrireducens (strain ATCC BAA-621 / DSM 15236 / T118) (Rhodoferax ferrireducens).